A 552-amino-acid chain; its full sequence is HTH-type transcriptional regulator SgrR (552 aa).

The HTH marR-type domain occupies 1-116 (MPSARLQQQF…LVSHLGRSFR (116 aa)). The segment at residues 26-49 (LNELAALLSCSRRHMRTLLNTMQD) is a DNA-binding region (H-T-H motif). The interval 163 to 492 (ELEADIAHHW…IDWQVDAARW (330 aa)) is solute-binding.

Its function is as follows. Activates the small RNA gene sgrS under glucose-phosphate stress conditions as well as yfdZ. Represses its own transcription under both stress and non-stress conditions. Might act as a sensor of the intracellular accumulation of phosphoglucose by binding these molecules in its C-terminal solute-binding domain. In Escherichia coli O157:H7, this protein is HTH-type transcriptional regulator SgrR.